Consider the following 299-residue polypeptide: Probable GTP 3',8-cyclase (299 aa).

The Radical SAM core domain occupies 4–229 (LHNREIKSLR…MQNRKKYLVD (226 aa)). Position 13 (arginine 13) interacts with GTP. The [4Fe-4S] cluster site is built by cysteine 20 and cysteine 24. Tyrosine 26 is an S-adenosyl-L-methionine binding site. Cysteine 27 is a [4Fe-4S] cluster binding site. Position 61 (lysine 61) interacts with GTP. Glycine 65 lines the S-adenosyl-L-methionine pocket. Threonine 94 is a binding site for GTP. An S-adenosyl-L-methionine-binding site is contributed by serine 118. GTP is bound at residue lysine 154. Positions 245 and 248 each coordinate [4Fe-4S] cluster. A GTP-binding site is contributed by 250–252 (RIR). Cysteine 262 lines the [4Fe-4S] cluster pocket.

This sequence belongs to the radical SAM superfamily. MoaA family. [4Fe-4S] cluster is required as a cofactor.

It catalyses the reaction GTP + AH2 + S-adenosyl-L-methionine = (8S)-3',8-cyclo-7,8-dihydroguanosine 5'-triphosphate + 5'-deoxyadenosine + L-methionine + A + H(+). The protein operates within cofactor biosynthesis; molybdopterin biosynthesis. Functionally, catalyzes the cyclization of GTP to (8S)-3',8-cyclo-7,8-dihydroguanosine 5'-triphosphate. The protein is Probable GTP 3',8-cyclase of Methanococcus aeolicus (strain ATCC BAA-1280 / DSM 17508 / OCM 812 / Nankai-3).